Here is a 525-residue protein sequence, read N- to C-terminus: GMP synthase [glutamine-hydrolyzing] (525 aa).

One can recognise a Glutamine amidotransferase type-1 domain in the interval 9–207; it reads RILILDFGSQ…VLDICGCAAL (199 aa). Catalysis depends on Cys-86, which acts as the Nucleophile. Catalysis depends on residues His-181 and Glu-183. One can recognise a GMPS ATP-PPase domain in the interval 208–400; the sequence is WTPSNIVDDA…LGLPYDMVYR (193 aa). Residue 235-241 participates in ATP binding; it reads SGGVDSS.

In terms of assembly, homodimer.

The enzyme catalyses XMP + L-glutamine + ATP + H2O = GMP + L-glutamate + AMP + diphosphate + 2 H(+). The protein operates within purine metabolism; GMP biosynthesis; GMP from XMP (L-Gln route): step 1/1. Its function is as follows. Catalyzes the synthesis of GMP from XMP. In Pseudomonas aeruginosa (strain UCBPP-PA14), this protein is GMP synthase [glutamine-hydrolyzing].